The chain runs to 186 residues: Elongation factor P (186 aa).

The protein belongs to the elongation factor P family.

It localises to the cytoplasm. It participates in protein biosynthesis; polypeptide chain elongation. Involved in peptide bond synthesis. Stimulates efficient translation and peptide-bond synthesis on native or reconstituted 70S ribosomes in vitro. Probably functions indirectly by altering the affinity of the ribosome for aminoacyl-tRNA, thus increasing their reactivity as acceptors for peptidyl transferase. This is Elongation factor P from Maridesulfovibrio salexigens (strain ATCC 14822 / DSM 2638 / NCIMB 8403 / VKM B-1763) (Desulfovibrio salexigens).